The following is a 439-amino-acid chain: Actin-related protein 3 (439 aa).

A disordered region spans residues 40 to 71 (PSAGTGGSGSGRPAVANKPSFLTGGAGPGGHL).

This sequence belongs to the actin family. ARP3 subfamily. In terms of assembly, component of the Arp2/3 complex composed.

It localises to the cytoplasm. It is found in the cytoskeleton. Functionally, functions as ATP-binding component of the Arp2/3 complex which is involved in regulation of actin polymerization and together with an activating nucleation-promoting factor (NPF) mediates the formation of branched actin networks. Seems to contact the pointed end of the daughter actin filament. This is Actin-related protein 3 (arp-3) from Neurospora crassa (strain ATCC 24698 / 74-OR23-1A / CBS 708.71 / DSM 1257 / FGSC 987).